A 29-amino-acid polypeptide reads, in one-letter code: Potassium channel toxin alpha-KTx 3.15 (29 aa).

The cysteines at positions 8 and 27 are disulfide-linked.

Belongs to the short scorpion toxin superfamily. Potassium channel inhibitor family. Alpha-KTx 03 subfamily. In terms of tissue distribution, expressed by the venom gland.

It is found in the secreted. In terms of biological role, may play a role in blocking voltage-gated potassium channels Kv1.1/KCNA1, Kv1.3/KCNA3 and Kv1.6/KCNA6. The polypeptide is Potassium channel toxin alpha-KTx 3.15 (Mesobuthus gibbosus (Mediterranean checkered scorpion)).